Reading from the N-terminus, the 333-residue chain is MEILNNLAERVISGEKLTKEEGLQILSIPDELVMDLVEEASKVRKYFFKNQMEFCSLINAKNGACTEDCSFCAQSSHYKTPINAYGLVSKDEMLAGAEKAVAINANRYCIVVSGRKASKEEVDKIADAIKEIKKTYPIKVCCSLGTVDEKDLDKLKVAGVDRINHNLETSEKYFSKIVSTHTWKERYKTIKKIQKVGLSTCTGGIFGMGESDEDIIDLAMTYRDLEVDSIPLNFLIPIPGTPLGDKHNLTPLRCLKIIALFRLFNPKSEIRLCGGRELNLKDYHDIAFEVANCLMAGGYLTRAGREPGKDEEMARRLGRELIKNGASFSVSNE.

In terms of domain architecture, Radical SAM core spans 47 to 276; the sequence is FFKNQMEFCS…KSEIRLCGGR (230 aa). The [4Fe-4S] cluster site is built by C65, C69, and C72. C109, C141, C201, and R271 together coordinate [2Fe-2S] cluster.

Belongs to the radical SAM superfamily. Biotin synthase family. Homodimer. Requires [4Fe-4S] cluster as cofactor. [2Fe-2S] cluster is required as a cofactor.

It catalyses the reaction (4R,5S)-dethiobiotin + (sulfur carrier)-SH + 2 reduced [2Fe-2S]-[ferredoxin] + 2 S-adenosyl-L-methionine = (sulfur carrier)-H + biotin + 2 5'-deoxyadenosine + 2 L-methionine + 2 oxidized [2Fe-2S]-[ferredoxin]. It functions in the pathway cofactor biosynthesis; biotin biosynthesis; biotin from 7,8-diaminononanoate: step 2/2. Its function is as follows. Catalyzes the conversion of dethiobiotin (DTB) to biotin by the insertion of a sulfur atom into dethiobiotin via a radical-based mechanism. The chain is Biotin synthase from Sulfurihydrogenibium sp. (strain YO3AOP1).